Here is a 158-residue protein sequence, read N- to C-terminus: Low molecular weight phosphotyrosine protein phosphatase (158 aa).

Alanine 2 carries the post-translational modification N-acetylalanine. Cysteine 13 acts as the Nucleophile in catalysis. Residue arginine 19 is part of the active site. Aspartate 130 serves as the catalytic Proton donor. A phosphotyrosine mark is found at tyrosine 132 and tyrosine 133.

Belongs to the low molecular weight phosphotyrosine protein phosphatase family. In terms of assembly, interacts with EPHA2; dephosphorylates EPHA2. Interacts with EPHB1. Interacts with the SH3 domain of SPTAN1. In terms of processing, phosphorylated by LCK. Phosphorylation at Tyr-132 increases its phosphatase activity.

Its subcellular location is the cytoplasm. It catalyses the reaction O-phospho-L-tyrosyl-[protein] + H2O = L-tyrosyl-[protein] + phosphate. The catalysed reaction is a phosphate monoester + H2O = an alcohol + phosphate. With respect to regulation, inhibited by sulfhydryl reagents. Functionally, acts on tyrosine phosphorylated proteins, low-MW aryl phosphates and natural and synthetic acyl phosphates with differences in substrate specificity between isoform 1 and isoform 2. The protein is Low molecular weight phosphotyrosine protein phosphatase (ACP1) of Pongo abelii (Sumatran orangutan).